The chain runs to 668 residues: Ras guanine nucleotide exchange factor D (668 aa).

The Rho-GAP domain occupies 27 to 224 (KKLESIFGIA…LMVMDIDEFD (198 aa)). Positions 237-362 (GESIVKAATF…YFQTFFKPVI (126 aa)) constitute an N-terminal Ras-GEF domain. The 231-residue stretch at 433 to 663 (GSNIIAQQIT…HSISHKLEPR (231 aa)) folds into the Ras-GEF domain.

Functionally, promotes the exchange of Ras-bound GDP by GTP. This chain is Ras guanine nucleotide exchange factor D (gefD), found in Dictyostelium discoideum (Social amoeba).